A 76-amino-acid chain; its full sequence is uncharacterized protein (76 aa).

This is an uncharacterized protein from African swine fever virus (isolate Tick/Malawi/Lil 20-1/1983) (ASFV).